The chain runs to 301 residues: Probable alpha-L-glutamate ligase (301 aa).

The ATP-grasp domain occupies 104-287; the sequence is LQLLSRRGIG…VAGMIIEHLE (184 aa). ATP contacts are provided by residues lysine 141, 178–179, aspartate 187, and 211–213; these read EY and RSN. Mg(2+) is bound by residues aspartate 248, glutamate 260, and asparagine 262. The Mn(2+) site is built by aspartate 248, glutamate 260, and asparagine 262.

This sequence belongs to the RimK family. The cofactor is Mg(2+). Mn(2+) serves as cofactor.

This chain is Probable alpha-L-glutamate ligase, found in Pseudomonas putida (strain W619).